Here is a 356-residue protein sequence, read N- to C-terminus: UDP-N-acetylglucosamine--N-acetylmuramyl-(pentapeptide) pyrophosphoryl-undecaprenol N-acetylglucosamine transferase (356 aa).

3 residues coordinate UDP-N-acetyl-alpha-D-glucosamine: R166, S196, and Q290.

This sequence belongs to the glycosyltransferase 28 family. MurG subfamily.

It localises to the cell membrane. The catalysed reaction is Mur2Ac(oyl-L-Ala-gamma-D-Glu-L-Lys-D-Ala-D-Ala)-di-trans,octa-cis-undecaprenyl diphosphate + UDP-N-acetyl-alpha-D-glucosamine = beta-D-GlcNAc-(1-&gt;4)-Mur2Ac(oyl-L-Ala-gamma-D-Glu-L-Lys-D-Ala-D-Ala)-di-trans,octa-cis-undecaprenyl diphosphate + UDP + H(+). It participates in cell wall biogenesis; peptidoglycan biosynthesis. In terms of biological role, cell wall formation. Catalyzes the transfer of a GlcNAc subunit on undecaprenyl-pyrophosphoryl-MurNAc-pentapeptide (lipid intermediate I) to form undecaprenyl-pyrophosphoryl-MurNAc-(pentapeptide)GlcNAc (lipid intermediate II). The polypeptide is UDP-N-acetylglucosamine--N-acetylmuramyl-(pentapeptide) pyrophosphoryl-undecaprenol N-acetylglucosamine transferase (Staphylococcus aureus (strain MRSA252)).